Here is a 503-residue protein sequence, read N- to C-terminus: MEEFQGYIELEGSWQHNFFYPLIFQEYIFSFAYGHDLNKSILLETSGNRKYSLLIVKRLITRMYQHNHLILSSNDSNQNDFWGHKRNFYSQMISEGFSLIVEIPFYLLLIASPEKKKIVKSHNLRSIHSIFPFLEDKFLHLNSVLDILLPYPTHLEILVQTLRYWIRDASSLHLLRLFLYEYHNWNSLFIPKKSIYFFFKRNQRLFLFLYNFHVCEYESILFFICNQSSHLRATSYGALLERTFFYGKLEYLVKLFTKDFAGILWLFKDPSPHSVRYKGKSILASKGTFFLMHKWKFYLIYFWQCNFSVWSHPRRIYINRLSTHCLDFIGFFSSVQLTSSVVRSQILENTFLIDNTIKRFDPKIPISTLIGSLAKAQFCNRLGHPISKSVWIDLSDSDIIDRFGRICRNLSHYYSGSSRKKSLYRLKYILKISCARTLARKHKSAVRAFLKRLGSEFLEEFFTEQEKVLSLILPKNGSNSWGFYGGSIWYLDIICIHNLANDE.

This sequence belongs to the intron maturase 2 family. MatK subfamily.

It is found in the plastid. It localises to the chloroplast. Its function is as follows. Usually encoded in the trnK tRNA gene intron. Probably assists in splicing its own and other chloroplast group II introns. The protein is Maturase K of Silene latifolia (White campion).